The chain runs to 216 residues: Guanylate kinase (216 aa).

The Guanylate kinase-like domain occupies 11–189; sequence GVLIVISGPS…AVKKIEAILL (179 aa). Position 18–25 (18–25) interacts with ATP; sequence GPSGAGKG.

It belongs to the guanylate kinase family.

Its subcellular location is the cytoplasm. It carries out the reaction GMP + ATP = GDP + ADP. Its function is as follows. Essential for recycling GMP and indirectly, cGMP. This chain is Guanylate kinase (gmk), found in Clostridium perfringens (strain 13 / Type A).